The sequence spans 389 residues: S-adenosylmethionine synthase (389 aa).

H17 is a binding site for ATP. D19 is a binding site for Mg(2+). E45 serves as a coordination point for K(+). Positions 58 and 101 each coordinate L-methionine. Residues 101-111 (QSPDIAQGVTE) are flexible loop. Residues 168–170 (DSK), 234–235 (RF), D243, 249–250 (RK), A266, and K270 each bind ATP. D243 contributes to the L-methionine binding site. L-methionine is bound at residue K274.

The protein belongs to the AdoMet synthase family. As to quaternary structure, homotetramer; dimer of dimers. Mg(2+) serves as cofactor. The cofactor is K(+).

It localises to the cytoplasm. It catalyses the reaction L-methionine + ATP + H2O = S-adenosyl-L-methionine + phosphate + diphosphate. The protein operates within amino-acid biosynthesis; S-adenosyl-L-methionine biosynthesis; S-adenosyl-L-methionine from L-methionine: step 1/1. Functionally, catalyzes the formation of S-adenosylmethionine (AdoMet) from methionine and ATP. The overall synthetic reaction is composed of two sequential steps, AdoMet formation and the subsequent tripolyphosphate hydrolysis which occurs prior to release of AdoMet from the enzyme. This chain is S-adenosylmethionine synthase, found in Geobacter sp. (strain M21).